We begin with the raw amino-acid sequence, 395 residues long: Xylose isomerase (395 aa).

Residues histidine 54 and aspartate 57 contribute to the active site. Mg(2+) is bound by residues glutamate 181, glutamate 217, histidine 220, aspartate 245, aspartate 255, aspartate 257, and aspartate 293.

It belongs to the xylose isomerase family. In terms of assembly, homotetramer. Mg(2+) is required as a cofactor.

The protein resides in the cytoplasm. The enzyme catalyses alpha-D-xylose = alpha-D-xylulofuranose. This is Xylose isomerase from Arthrobacter sp. (strain FB24).